Here is a 383-residue protein sequence, read N- to C-terminus: Succinyl-diaminopimelate desuccinylase (383 aa).

H73 provides a ligand contact to Zn(2+). D75 is an active-site residue. D107 provides a ligand contact to Zn(2+). Residue E141 is the Proton acceptor of the active site. Zn(2+) is bound by residues E142, E170, and H356.

This sequence belongs to the peptidase M20A family. DapE subfamily. As to quaternary structure, homodimer. Requires Zn(2+) as cofactor. The cofactor is Co(2+).

It carries out the reaction N-succinyl-(2S,6S)-2,6-diaminopimelate + H2O = (2S,6S)-2,6-diaminopimelate + succinate. Its pathway is amino-acid biosynthesis; L-lysine biosynthesis via DAP pathway; LL-2,6-diaminopimelate from (S)-tetrahydrodipicolinate (succinylase route): step 3/3. Catalyzes the hydrolysis of N-succinyl-L,L-diaminopimelic acid (SDAP), forming succinate and LL-2,6-diaminopimelate (DAP), an intermediate involved in the bacterial biosynthesis of lysine and meso-diaminopimelic acid, an essential component of bacterial cell walls. In Pseudomonas fluorescens (strain Pf0-1), this protein is Succinyl-diaminopimelate desuccinylase.